Reading from the N-terminus, the 334-residue chain is Cytosolic Fe-S cluster assembly factor NUBP1 homolog (334 aa).

A disordered region spans residues 1-24 (MSSAEVTAAAKPADAPEHCPGTAS). Residues Cys19, Cys33, Cys36, and Cys42 each coordinate [4Fe-4S] cluster. Position 72–79 (72–79 (GKGGVGKS)) interacts with ATP. [4Fe-4S] cluster contacts are provided by Cys247 and Cys250.

It belongs to the Mrp/NBP35 ATP-binding proteins family. NUBP1/NBP35 subfamily. As to quaternary structure, heterotetramer of 2 NUBP1 and 2 NUBP2 chains. Requires [4Fe-4S] cluster as cofactor.

The protein resides in the cytoplasm. In terms of biological role, component of the cytosolic iron-sulfur (Fe/S) protein assembly (CIA) machinery. Required for maturation of extramitochondrial Fe-S proteins. The NUBP1-NUBP2 heterotetramer forms a Fe-S scaffold complex, mediating the de novo assembly of an Fe-S cluster and its transfer to target apoproteins. The polypeptide is Cytosolic Fe-S cluster assembly factor NUBP1 homolog (Culex quinquefasciatus (Southern house mosquito)).